The following is a 524-amino-acid chain: CDC50-related protein CDC50.1 (524 aa).

Composition is skewed to polar residues over residues 1–19 (MGENSTTGLRGQADVSQFS) and 26–39 (TLSSPPTGQRQQSL). Disordered stretches follow at residues 1 to 40 (MGENSTTGLRGQADVSQFSDAAVEPTLSSPPTGQRQQSLP) and 52 to 86 (APSVGGGGGWPFQRQGSSRLTSRGTSLSSCSDAGS). Residues 1 to 181 (MGENSTTGLR…GMYPLWSAGV (181 aa)) are Cytoplasmic-facing. Low complexity predominate over residues 67 to 80 (GSSRLTSRGTSLSS). The chain crosses the membrane as a helical span at residues 182 to 202 (VLRLCLLGALFFVSVGAWLIF). At 203–473 (EDEQHVECKL…VQKSRLGGRS (271 aa)) the chain is on the extracellular side. N-linked (GlcNAc...) asparagine glycosylation is found at Asn297 and Asn339. Residues 474 to 494 (LFIGIAYLSFGCLLTMLVFYM) traverse the membrane as a helical segment. At 495–524 (LWKKWQYRREGEEIRDLRWQTKTRGSKKTK) the chain is on the cytoplasmic side.

Belongs to the CDC50/LEM3 family. In terms of assembly, interacts with GC; the interaction regulates guanylate cyclase GC trafficking and sensing environmental changes.

The protein localises to the membrane. In tachyzoites, required for the cellular trafficking of guanylate cyclase GC and UGO to the cell membrane. May play a role in the folding of the GC P-type ATPase-like domain to sense vacuolar changes in phosphatidic acid and pH levels which trigger parasite egress. This is CDC50-related protein CDC50.1 from Toxoplasma gondii (strain ATCC 50853 / GT1).